The sequence spans 29 residues: Trypsin inhibitor 4 (29 aa).

3 disulfides stabilise this stretch: Cys3–Cys20, Cys10–Cys22, and Cys16–Cys28.

The protein belongs to the protease inhibitor I7 (squash-type serine protease inhibitor) family.

It localises to the secreted. Strongly inhibits trypsin, weakly inhibits chymotrypsin. In Cyclanthera pedata (Achocha), this protein is Trypsin inhibitor 4.